We begin with the raw amino-acid sequence, 373 residues long: Putative zinc finger protein 012R (373 aa).

Residues 2–29 form a C2H2-type zinc finger; the sequence is FECTHCDLHFESKSKLATHQKTKKCTAH.

Belongs to the IIV-6 302L family.

The chain is Putative zinc finger protein 012R from Invertebrate iridescent virus 3 (IIV-3).